A 236-amino-acid polypeptide reads, in one-letter code: Leucyl/phenylalanyl-tRNA--protein transferase (236 aa).

It belongs to the L/F-transferase family.

It is found in the cytoplasm. It carries out the reaction N-terminal L-lysyl-[protein] + L-leucyl-tRNA(Leu) = N-terminal L-leucyl-L-lysyl-[protein] + tRNA(Leu) + H(+). It catalyses the reaction N-terminal L-arginyl-[protein] + L-leucyl-tRNA(Leu) = N-terminal L-leucyl-L-arginyl-[protein] + tRNA(Leu) + H(+). The catalysed reaction is L-phenylalanyl-tRNA(Phe) + an N-terminal L-alpha-aminoacyl-[protein] = an N-terminal L-phenylalanyl-L-alpha-aminoacyl-[protein] + tRNA(Phe). In terms of biological role, functions in the N-end rule pathway of protein degradation where it conjugates Leu, Phe and, less efficiently, Met from aminoacyl-tRNAs to the N-termini of proteins containing an N-terminal arginine or lysine. The polypeptide is Leucyl/phenylalanyl-tRNA--protein transferase (Shewanella halifaxensis (strain HAW-EB4)).